We begin with the raw amino-acid sequence, 287 residues long: Small ribosomal subunit protein uS2 (287 aa).

A disordered region spans residues 235–287; sequence ESGFATGGGDWEATAPAAASGWDDAAAQPQNWDSAAQGAASWDEAAAPKEGQW. A compositionally biased stretch (low complexity) spans 247–261; it reads ATAPAAASGWDDAAA.

The protein belongs to the universal ribosomal protein uS2 family. In terms of assembly, component of the small ribosomal subunit. Mature ribosomes consist of a small (40S) and a large (60S) subunit. The 40S subunit contains about 33 different proteins and 1 molecule of RNA (18S). The 60S subunit contains about 49 different proteins and 3 molecules of RNA (25S, 5.8S and 5S). Interacts with RPS21.

It localises to the cytoplasm. In terms of biological role, required for the assembly and/or stability of the 40S ribosomal subunit. Required for the processing of the 20S rRNA-precursor to mature 18S rRNA in a late step of the maturation of 40S ribosomal subunits. In Pyricularia oryzae (strain 70-15 / ATCC MYA-4617 / FGSC 8958) (Rice blast fungus), this protein is Small ribosomal subunit protein uS2.